Here is a 620-residue protein sequence, read N- to C-terminus: 1-deoxy-D-xylulose-5-phosphate synthase (620 aa).

Thiamine diphosphate-binding positions include His-75 and 116–118 (AHS). Asp-147 provides a ligand contact to Mg(2+). Thiamine diphosphate is bound by residues 148–149 (GA), Asn-177, Tyr-284, and Glu-366. Residue Asn-177 coordinates Mg(2+).

The protein belongs to the transketolase family. DXPS subfamily. In terms of assembly, homodimer. Requires Mg(2+) as cofactor. Thiamine diphosphate serves as cofactor.

The enzyme catalyses D-glyceraldehyde 3-phosphate + pyruvate + H(+) = 1-deoxy-D-xylulose 5-phosphate + CO2. It functions in the pathway metabolic intermediate biosynthesis; 1-deoxy-D-xylulose 5-phosphate biosynthesis; 1-deoxy-D-xylulose 5-phosphate from D-glyceraldehyde 3-phosphate and pyruvate: step 1/1. Functionally, catalyzes the acyloin condensation reaction between C atoms 2 and 3 of pyruvate and glyceraldehyde 3-phosphate to yield 1-deoxy-D-xylulose-5-phosphate (DXP). In Bordetella avium (strain 197N), this protein is 1-deoxy-D-xylulose-5-phosphate synthase.